A 102-amino-acid polypeptide reads, in one-letter code: Heat shock protein HspQ (102 aa).

This sequence belongs to the HspQ family.

The protein localises to the cytoplasm. Functionally, involved in the degradation of certain denaturated proteins, including DnaA, during heat shock stress. This Pectobacterium atrosepticum (strain SCRI 1043 / ATCC BAA-672) (Erwinia carotovora subsp. atroseptica) protein is Heat shock protein HspQ.